Reading from the N-terminus, the 349-residue chain is UDP-N-acetylenolpyruvoylglucosamine reductase (349 aa).

The FAD-binding PCMH-type domain maps to F26–A197. The active site involves R173. Catalysis depends on S249, which acts as the Proton donor. E345 is an active-site residue.

Belongs to the MurB family. Requires FAD as cofactor.

Its subcellular location is the cytoplasm. It carries out the reaction UDP-N-acetyl-alpha-D-muramate + NADP(+) = UDP-N-acetyl-3-O-(1-carboxyvinyl)-alpha-D-glucosamine + NADPH + H(+). The protein operates within cell wall biogenesis; peptidoglycan biosynthesis. In terms of biological role, cell wall formation. This is UDP-N-acetylenolpyruvoylglucosamine reductase from Burkholderia pseudomallei (strain K96243).